The following is a 148-amino-acid chain: 3-dehydroquinate dehydratase (148 aa).

Residue Y23 is the Proton acceptor of the active site. 3 residues coordinate substrate: N75, H81, and D88. H101 (proton donor) is an active-site residue. Residues L102 to S103 and R112 contribute to the substrate site.

This sequence belongs to the type-II 3-dehydroquinase family. Homododecamer.

The catalysed reaction is 3-dehydroquinate = 3-dehydroshikimate + H2O. Its pathway is metabolic intermediate biosynthesis; chorismate biosynthesis; chorismate from D-erythrose 4-phosphate and phosphoenolpyruvate: step 3/7. Its function is as follows. Catalyzes a trans-dehydration via an enolate intermediate. In Ectopseudomonas mendocina (strain ymp) (Pseudomonas mendocina), this protein is 3-dehydroquinate dehydratase.